A 521-amino-acid polypeptide reads, in one-letter code: Beta-glucosidase 6 (521 aa).

An N-terminal signal peptide occupies residues 1 to 38; it reads MGRIKSSSGRCSTARLEAVAVLVVVFGVASSSLRGCIA. Residues Gln-64, His-165, and 210-211 contribute to the a beta-D-glucoside site; that span reads NE. Catalysis depends on Glu-211, which acts as the Proton donor. Cys-230 and Cys-238 are joined by a disulfide. Asn-291 carries N-linked (GlcNAc...) asparagine glycosylation. An a beta-D-glucoside-binding site is contributed by Tyr-354. N-linked (GlcNAc...) asparagine glycosylation is found at Asn-362 and Asn-372. A beta-D-glucoside contacts are provided by residues Glu-427, Trp-477, 484–485, and Phe-493; that span reads EW. Glu-427 (nucleophile) is an active-site residue.

Belongs to the glycosyl hydrolase 1 family. Homodimer.

The protein localises to the secreted. It catalyses the reaction Hydrolysis of terminal, non-reducing beta-D-glucosyl residues with release of beta-D-glucose.. Hydrolyzes glycosides, oligosaccharides and hydrophobic glycosides. Possesses gibberellin ester beta-D-glucosidase activity. Can hydrolyze gibberellin A4 beta-D-glucosyl ester in vitro. This Oryza sativa subsp. japonica (Rice) protein is Beta-glucosidase 6.